A 433-amino-acid chain; its full sequence is DNA polymerase processivity factor (433 aa).

Positions 274–433 are disordered; sequence RGDPFDKNYV…VPNTKKQKCG (160 aa). The span at 298-307 shows a compositional bias: low complexity; the sequence is SLSSLANAGG. 2 stretches are compositionally biased toward gly residues: residues 325–336 and 344–359; these read GLGGLGGGGGGG and GGGG…GGGG. Basic and acidic residues predominate over residues 360 to 376; it reads GDHDHGLSSKEKYEQHK. Positions 385–398 are enriched in gly residues; the sequence is GGSGGGGGGGGGGL.

This sequence belongs to the herpesviridae polymerase accessory protein family. Forms homodimers. Interacts with host SMARCB1. Interacts with host NCL/nucleolin; this interaction is important for the organization of proteins within viral replication compartments. Interacts with UL112/UL113; this interaction is necessary for efficient viral DNA replication. Interacts with UL84. Interacts with the uracil DNA glycosylase UL114. Interacts with the DNA polymerase catalytic subunit UL54. Interacts with host IRF3. Interacts with host RELA. Post-translationally, phosphorylated by UL97 on serine residues, phosphorylation seems important for UL44 nuclear entry but does not directly affect its role in replication. Sumoylated. Sumoylation on Lys-410 increases viral DNA replication.

The protein localises to the virion. The protein resides in the host nucleus. Accessory subunit of the DNA polymerase that plays an essential role in viral DNA replication and acts by increasing the processivity of polymerization. Forms dimers that binds to double-stranded DNA and UL54 specifically to stimulates long chain DNA synthesis efficiently. Plays an important role in maintaining the structure of viral replication compartments by interacting with host nucleolin/NUC. In addition, suppresses innate immune responses through effects on host IRF3 and NF-kappa-B. Mechanistically, interfere with the binding of IRF3 and the p65 NF-kappa-B subunit to the promoters of antiviral genes, thereby inhibiting the expression of these genes. The protein is DNA polymerase processivity factor (UL44) of Human cytomegalovirus (strain Merlin) (HHV-5).